The sequence spans 308 residues: Methionyl-tRNA formyltransferase (308 aa).

Residue 110–113 coordinates (6S)-5,6,7,8-tetrahydrofolate; the sequence is SLLP.

The protein belongs to the Fmt family.

The catalysed reaction is L-methionyl-tRNA(fMet) + (6R)-10-formyltetrahydrofolate = N-formyl-L-methionyl-tRNA(fMet) + (6S)-5,6,7,8-tetrahydrofolate + H(+). In terms of biological role, attaches a formyl group to the free amino group of methionyl-tRNA(fMet). The formyl group appears to play a dual role in the initiator identity of N-formylmethionyl-tRNA by promoting its recognition by IF2 and preventing the misappropriation of this tRNA by the elongation apparatus. The protein is Methionyl-tRNA formyltransferase of Neisseria meningitidis serogroup C / serotype 2a (strain ATCC 700532 / DSM 15464 / FAM18).